The following is a 507-amino-acid chain: Protein phosphatase 1J (507 aa).

Disordered stretches follow at residues 1-102 (MLNR…RLPW) and 197-220 (LCLPSTPGTPGAPSPSQLVSPQSC). Residues 14-23 (SSGGTSSQRS) are compositionally biased toward low complexity. Thr-41 is modified (phosphothreonine). Positions 59–73 (TAETTVSFSRPTFLQ) are enriched in polar residues. A phosphoserine mark is found at Ser-65 and Ser-75. In terms of domain architecture, PPM-type phosphatase spans 103–499 (STGYAEVINA…DDISVFVIPL (397 aa)). Over residues 199 to 212 (LPSTPGTPGAPSPS) the composition is skewed to low complexity.

The protein belongs to the PP2C family. Interacts with UBE2I/UBC9. As to expression, specifically expressed in the testicular germ cells.

It catalyses the reaction O-phospho-L-seryl-[protein] + H2O = L-seryl-[protein] + phosphate. The catalysed reaction is O-phospho-L-threonyl-[protein] + H2O = L-threonyl-[protein] + phosphate. This Mus musculus (Mouse) protein is Protein phosphatase 1J (Ppm1j).